We begin with the raw amino-acid sequence, 277 residues long: Shikimate dehydrogenase (NADP(+)) (277 aa).

Residues 18 to 20 (SKS) and T65 contribute to the shikimate site. Catalysis depends on K69, which acts as the Proton acceptor. E81 contributes to the NADP(+) binding site. The shikimate site is built by N90 and D106. NADP(+)-binding positions include 130–134 (GAGGA), 154–159 (NRTFSK), and M217. Y219 lines the shikimate pocket. G241 is a binding site for NADP(+).

This sequence belongs to the shikimate dehydrogenase family. Homodimer.

It carries out the reaction shikimate + NADP(+) = 3-dehydroshikimate + NADPH + H(+). Its pathway is metabolic intermediate biosynthesis; chorismate biosynthesis; chorismate from D-erythrose 4-phosphate and phosphoenolpyruvate: step 4/7. Involved in the biosynthesis of the chorismate, which leads to the biosynthesis of aromatic amino acids. Catalyzes the reversible NADPH linked reduction of 3-dehydroshikimate (DHSA) to yield shikimate (SA). The chain is Shikimate dehydrogenase (NADP(+)) from Vibrio parahaemolyticus serotype O3:K6 (strain RIMD 2210633).